We begin with the raw amino-acid sequence, 488 residues long: N-succinylglutamate 5-semialdehyde dehydrogenase (488 aa).

Glycine 221–glycine 226 contributes to the NAD(+) binding site. Active-site residues include glutamate 244 and cysteine 278.

This sequence belongs to the aldehyde dehydrogenase family. AstD subfamily.

The catalysed reaction is N-succinyl-L-glutamate 5-semialdehyde + NAD(+) + H2O = N-succinyl-L-glutamate + NADH + 2 H(+). It participates in amino-acid degradation; L-arginine degradation via AST pathway; L-glutamate and succinate from L-arginine: step 4/5. Catalyzes the NAD-dependent reduction of succinylglutamate semialdehyde into succinylglutamate. The polypeptide is N-succinylglutamate 5-semialdehyde dehydrogenase (Pseudomonas fluorescens (strain ATCC BAA-477 / NRRL B-23932 / Pf-5)).